Reading from the N-terminus, the 347-residue chain is GMP reductase (347 aa).

Residue 108 to 131 (ADFQKTKDIMALTDDLIFICVDIA) participates in NADP(+) binding. The K(+) site is built by Gly181 and Gly183. Residue Cys186 is the Thioimidate intermediate of the active site. 216 to 239 (IIGDGGCSCAGDVSKAFGGGADFV) serves as a coordination point for NADP(+).

This sequence belongs to the IMPDH/GMPR family. GuaC type 1 subfamily. Homotetramer.

The catalysed reaction is IMP + NH4(+) + NADP(+) = GMP + NADPH + 2 H(+). Catalyzes the irreversible NADPH-dependent deamination of GMP to IMP. It functions in the conversion of nucleobase, nucleoside and nucleotide derivatives of G to A nucleotides, and in maintaining the intracellular balance of A and G nucleotides. This is GMP reductase from Aliivibrio salmonicida (strain LFI1238) (Vibrio salmonicida (strain LFI1238)).